A 203-amino-acid polypeptide reads, in one-letter code: MSNIAHGNPQKRPGYAIDIEASCRKRGKSAPAEDCLNEAKTPLDEIESRVVALQRQIANLNSGTLLQSIKEATARLATSWALVTKHQRYVDGYQELALPDAPTYHVQALKTAQSDLEKASQDAQAADGVLASAQKEQRDFKRVEENLVMLGAERATLDQSVRDLTLDKERCDVYLGMVEYGPDGLATLLEKDVGAWKGMLDLV.

It functions in the pathway mycotoxin biosynthesis. Its function is as follows. Part of the gene cluster that mediates the biosynthesis of gramillins A and B, bicyclic lipopeptides that induce cell death in maize leaves but not in wheat leaves. The nonribosomal peptide synthetase GRA1 incorporates respectively a glutamic adic (Glu), a leucine (Leu), a serine (Ser), a hydroxyglutamine (HOGln), a 2-amino decanoic acid, and 2 cysteins (CysB and CysA). The biosynthesis of 2-amino decanoic acid incorporated in gramillins could be initiated by a fatty acid synthase composed of the alpha and beta subunits FGSG_00036 and FGSG_11656. The cytochrome P450 monooxygenase FGSG_15680 could hydroxylate the fatty acid chain. Subsequent oxidation to the ketone by the oxidoreductase FGSG_00048 and transamination by aminotransferase FGSG_00049 could form 2-amino-decanoic acid. On the other hand, FGSG_15680 could also be responsible for the HO-modified glutamine at the gamma-position. Whether hydroxylation occurs on the fully assembled product or on the Gln residue prior to assembly into the gramillins requires further proof. The thioredoxin FGSG_00043 could also be required for the disulfide-bond formation between CysA and CysB. The specific involvement of the remaining proteins from the cluster is more difficult to discern, but could have broader regulatory (FGSG_00040 and FGSG_11657) or enzymatic functions (FGSG_00044 and FGSG_00045). The final C-domain of GRA1 does not possess the expected sequence of a termination CT domain, often implicated in macrocyclization and release of a cyclopeptidein fungal NRPs; and the thioesterase FGSG_00047 may act in concert with the terminal C-domain of GRA1 to catalyze the formation of the macrocyclic anhydride and release of the products. In Gibberella zeae (strain ATCC MYA-4620 / CBS 123657 / FGSC 9075 / NRRL 31084 / PH-1) (Wheat head blight fungus), this protein is Gramillins biosynthetic cluster protein FGSG_00038.